We begin with the raw amino-acid sequence, 260 residues long: UPF0246 protein Mmwyl1_3597 (260 aa).

It belongs to the UPF0246 family.

In Marinomonas sp. (strain MWYL1), this protein is UPF0246 protein Mmwyl1_3597.